Consider the following 26-residue polypeptide: Protein YsdD (26 aa).

The interval 1–26 (MTIDKNWLNRSNKDPGRSLRFTHQPV) is disordered.

This chain is Protein YsdD, found in Escherichia coli (strain K12).